The following is a 121-amino-acid chain: Large ribosomal subunit protein bL20 (121 aa).

It belongs to the bacterial ribosomal protein bL20 family.

Functionally, binds directly to 23S ribosomal RNA and is necessary for the in vitro assembly process of the 50S ribosomal subunit. It is not involved in the protein synthesizing functions of that subunit. This Chlamydia caviae (strain ATCC VR-813 / DSM 19441 / 03DC25 / GPIC) (Chlamydophila caviae) protein is Large ribosomal subunit protein bL20.